The primary structure comprises 283 residues: Pseudokinase OPG198 (283 aa).

ATP-binding residues include M1 and K30. A Protein kinase domain is found at 1 to 283 (MESFKYCFDN…DRLRRLFIQD (283 aa)).

Belongs to the protein kinase superfamily. Ser/Thr protein kinase family. Poxviruses subfamily. In terms of assembly, interacts with B1/VPK1. Interacts with host VRK1. Interacts with host VRK2.

It localises to the host nucleus. With respect to regulation, both catalytically active kinases B1/VPK1 and host VRK2 repress B12 inhibitory activity in a B1/VPK1 deletion mutant strain. Its function is as follows. Pseudokinase that plays a role in viral DNA replication repression by activating the antiviral protein BANF1 and inhibiting the activity of host VRK1, a cellular modulator of BANF1. The protein is Pseudokinase OPG198 (OPG198) of Homo sapiens (Human).